Here is a 1120-residue protein sequence, read N- to C-terminus: Transcription-repair-coupling factor (1120 aa).

Positions 591–756 (DLSNGMLMDR…MTGLKELSII (166 aa)) constitute a Helicase ATP-binding domain. 604–611 (GDVGFGKT) contacts ATP. The DEEQ box motif lies at 709 to 712 (DEEQ). The Helicase C-terminal domain maps to 777 to 931 (IIRDALLHEH…GFTIASHDMD (155 aa)).

This sequence in the N-terminal section; belongs to the UvrB family. The protein in the C-terminal section; belongs to the helicase family. RecG subfamily.

It is found in the cytoplasm. In terms of biological role, couples transcription and DNA repair by recognizing RNA polymerase (RNAP) stalled at DNA lesions. Mediates ATP-dependent release of RNAP and its truncated transcript from the DNA, and recruitment of nucleotide excision repair machinery to the damaged site. This chain is Transcription-repair-coupling factor, found in Rickettsia bellii (strain RML369-C).